Consider the following 101-residue polypeptide: Glutenin, high molecular weight subunit PC256 (101 aa).

A compositionally biased stretch (polar residues) spans 1-27 (EKLGQGQQPRQWLQPRQGQQGYYPTSP). A disordered region spans residues 1–65 (EKLGQGQQPR…QGYDSPYHVS (65 aa)). Over residues 41–62 (QGYYPTSPQQSGQGQQGYDSPY) the composition is skewed to low complexity.

The protein belongs to the gliadin/glutenin family. As to quaternary structure, disulfide-bridge linked aggregates.

Functionally, glutenins are high-molecular weight seed storage proteins of wheat endosperm. Thought to be responsible for the visco-elastic property of wheat dough. The protein is Glutenin, high molecular weight subunit PC256 of Triticum aestivum (Wheat).